Consider the following 403-residue polypeptide: Phosphopentomutase 2 (403 aa).

Residues Asp-13, Asp-298, His-303, Asp-339, His-340, and His-351 each coordinate Mn(2+).

This sequence belongs to the phosphopentomutase family. It depends on Mn(2+) as a cofactor.

Its subcellular location is the cytoplasm. The enzyme catalyses 2-deoxy-alpha-D-ribose 1-phosphate = 2-deoxy-D-ribose 5-phosphate. The catalysed reaction is alpha-D-ribose 1-phosphate = D-ribose 5-phosphate. It participates in carbohydrate degradation; 2-deoxy-D-ribose 1-phosphate degradation; D-glyceraldehyde 3-phosphate and acetaldehyde from 2-deoxy-alpha-D-ribose 1-phosphate: step 1/2. Its function is as follows. Isomerase that catalyzes the conversion of deoxy-ribose 1-phosphate (dRib-1-P) and ribose 1-phosphate (Rib-1-P) to deoxy-ribose 5-phosphate (dRib-5-P) and ribose 5-phosphate (Rib-5-P), respectively. This is Phosphopentomutase 2 from Streptococcus agalactiae serotype Ia (strain ATCC 27591 / A909 / CDC SS700).